The primary structure comprises 228 residues: MDTMRQRILVVDDDASLAEMLTIVLRGEGFDTAVIGDGTQALTAVRELRPDLVLLDLMLPGMNGIDVCRVLRADSGVPIVMLTAKTDTVDVVLGLESGADDYIMKPFKPKELVARVRARLRRNDDEPAEMLSIADVEIDVPAHKVTRNGEQISLTPLEFDLLVALARKPRQVFTRDVLLEQVWGYRHPADTRLVNVHVQRLRAKVEKDPENPTVVLTVRGVGYKAGPP.

Residues 7–120 (RILVVDDDAS…ELVARVRARL (114 aa)) enclose the Response regulatory domain. Asp-56 is modified (4-aspartylphosphate). Positions 128 to 227 (AEMLSIADVE…VRGVGYKAGP (100 aa)) form a DNA-binding region, ompR/PhoB-type.

In terms of processing, phosphorylated by MtrB.

In terms of biological role, member of the two-component regulatory system MtrA/MtrB. The protein is DNA-binding response regulator MtrA (mtrA) of Mycobacterium bovis (strain ATCC BAA-935 / AF2122/97).